A 590-amino-acid polypeptide reads, in one-letter code: Aspartate--tRNA(Asp/Asn) ligase (590 aa).

Glu175 serves as a coordination point for L-aspartate. Residues 199–202 (QQYK) form an aspartate region. L-aspartate contacts are provided by Arg221 and His450. Residue 221-223 (RDE) participates in ATP binding. Glu484 is an ATP binding site. Position 491 (Arg491) interacts with L-aspartate. Position 536 to 539 (536 to 539 (GVDR)) interacts with ATP.

Belongs to the class-II aminoacyl-tRNA synthetase family. Type 1 subfamily. As to quaternary structure, homodimer.

It localises to the cytoplasm. It catalyses the reaction tRNA(Asx) + L-aspartate + ATP = L-aspartyl-tRNA(Asx) + AMP + diphosphate. Its function is as follows. Aspartyl-tRNA synthetase with relaxed tRNA specificity since it is able to aspartylate not only its cognate tRNA(Asp) but also tRNA(Asn). Reaction proceeds in two steps: L-aspartate is first activated by ATP to form Asp-AMP and then transferred to the acceptor end of tRNA(Asp/Asn). In Bradyrhizobium sp. (strain BTAi1 / ATCC BAA-1182), this protein is Aspartate--tRNA(Asp/Asn) ligase.